The sequence spans 144 residues: Large ribosomal subunit protein uL15 (144 aa).

Residues 1–55 are disordered; sequence MQLNELKPVAGSRFKRLRKGRGLSSGHGFTSGRGTKGQKAHGKTRLGFEGGQMPL. Residues 23-35 show a composition bias toward gly residues; sequence LSSGHGFTSGRGT.

The protein belongs to the universal ribosomal protein uL15 family. In terms of assembly, part of the 50S ribosomal subunit.

Binds to the 23S rRNA. The protein is Large ribosomal subunit protein uL15 of Limosilactobacillus fermentum (strain NBRC 3956 / LMG 18251) (Lactobacillus fermentum).